The following is a 317-amino-acid chain: Transaldolase (317 aa).

The Schiff-base intermediate with substrate role is filled by K132.

Belongs to the transaldolase family. Type 1 subfamily. Homodimer.

It is found in the cytoplasm. The enzyme catalyses D-sedoheptulose 7-phosphate + D-glyceraldehyde 3-phosphate = D-erythrose 4-phosphate + beta-D-fructose 6-phosphate. It functions in the pathway carbohydrate degradation; pentose phosphate pathway; D-glyceraldehyde 3-phosphate and beta-D-fructose 6-phosphate from D-ribose 5-phosphate and D-xylulose 5-phosphate (non-oxidative stage): step 2/3. Its function is as follows. Transaldolase is important for the balance of metabolites in the pentose-phosphate pathway. The protein is Transaldolase of Shewanella denitrificans (strain OS217 / ATCC BAA-1090 / DSM 15013).